The following is a 396-amino-acid chain: 2-methyl-aconitate isomerase (396 aa).

Substrate is bound by residues Ser19 and 66–70 (SSTSK). The Proton donor/acceptor role is filled by Cys104. Position 104 is a cysteine sulfinic acid (-SO2H) (Cys104). Substrate contacts are provided by Asn106, Lys278, Ser309, and His314. The active-site Proton donor/acceptor is the Met318. Substrate is bound at residue Gly319.

The protein belongs to the PrpF family. In terms of assembly, homodimer.

It catalyses the reaction 2-methyl-trans-aconitate = 2-methyl-cis-aconitate. It participates in organic acid metabolism; propanoate degradation. Its function is as follows. Catalyzes the isomerization of 2-methyl-trans-aconitate to yield 2-methyl-cis-aconitate through a base-catalyzed proton abstraction coupled with a rotation about C2-C3 bond of 2-methyl-aconitate. This is 2-methyl-aconitate isomerase from Cupriavidus necator (Alcaligenes eutrophus).